The following is a 421-amino-acid chain: Putative hydro-lyase KRH_21160 (421 aa).

Disordered stretches follow at residues Thr-200–Thr-298 and Thr-312–Arg-421. The span at Gly-224–Arg-237 shows a compositional bias: basic residues. Composition is skewed to low complexity over residues Pro-243 to Pro-260 and Ser-370 to Ala-380.

It belongs to the D-glutamate cyclase family.

The protein is Putative hydro-lyase KRH_21160 of Kocuria rhizophila (strain ATCC 9341 / DSM 348 / NBRC 103217 / DC2201).